The chain runs to 172 residues: DNA-directed RNA polymerase II subunit RPB7 (172 aa).

This sequence belongs to the eukaryotic RPB7/RPC8 RNA polymerase subunit family. Component of the RNA polymerase II (Pol II) core complex consisting of 12 subunits: a ten-subunit catalytic core composed of POLR2A/RPB1, POLR2B/RPB2, POLR2C/RPB3, POLR2I/RPB9, POLR2J/RPB11, POLR2E/RPABC1, POLR2F/RPABC2, POLR2H/RPABC3, POLR2K/RPABC4 and POLR2L/RPABC5 and a mobile stalk composed of two subunits POLR2D/RPB4 and POLR2G/RPB7, protruding from the core and functioning primarily in transcription initiation. Part of Pol II(G) complex, in which Pol II core associates with an additional subunit POLR2M; unlike conventional Pol II, Pol II(G) functions as a transcriptional repressor. Part of TBP-based Pol II pre-initiation complex (PIC), in which Pol II core assembles with general transcription factors and other specific initiation factors including GTF2E1, GTF2E2, GTF2F1, GTF2F2, TCEA1, ERCC2, ERCC3, GTF2H2, GTF2H3, GTF2H4, GTF2H5, GTF2A1, GTF2A2, GTF2B and TBP; this large multi-subunit PIC complex mediates DNA unwinding and targets Pol II core to the transcription start site where the first phosphodiester bond forms.

Its subcellular location is the nucleus. In terms of biological role, core component of RNA polymerase II (Pol II), a DNA-dependent RNA polymerase which synthesizes mRNA precursors and many functional non-coding RNAs using the four ribonucleoside triphosphates as substrates. Pol II is the central component of the basal RNA polymerase II transcription machinery. It is composed of mobile elements that move relative to each other. POLR2G/RPB7 is part of a subcomplex with POLR2D/RPB4 that binds to a pocket formed by POLR2A/RPB1, POLR2B/RPB2 and POLR2F/RPABC2 at the base of the clamp element. The POLR2D/RPB4-POLR2G/RPB7 subcomplex seems to lock the clamp via POLR2G/RPB7 in the closed conformation thus preventing double-stranded DNA to enter the active site cleft. The POLR2D/RPB4-POLR2G/RPB7 subcomplex binds single-stranded DNA and RNA. In Bos taurus (Bovine), this protein is DNA-directed RNA polymerase II subunit RPB7 (POLR2G).